The following is a 174-amino-acid chain: Glutaredoxin-C5, chloroplastic (174 aa).

A chloroplast-targeting transit peptide spans M1 to M51. Residue T52 is modified to N-acetylthreonine. C90 is subject to S-glutathionyl cysteine; partial. Residues C90 and C93 are joined by a disulfide bond. A Glutaredoxin domain is found at C93 to N171. Glutathione contacts are provided by V135, C148, and T149. C148 is subject to S-glutathionyl cysteine; partial.

Belongs to the glutaredoxin family. CPYC subfamily. In terms of assembly, monomeric apoprotein and homodimeric holoprotein containing a [2Fe-2S] cluster. No in vitro interactions with SUFE1, BOLA1, BOLA2 or BOLA4. Post-translationally, glutathionylated.

It is found in the plastid. The protein resides in the chloroplast. Its function is as follows. Has a glutathione-disulfide oxidoreductase activity in the presence of NADPH and glutathione reductase. Reduces low molecular weight disulfides and proteins. Can assemble a [2Fe-2S] cluster, but cannot transfer it to an apoferredoxin. This is Glutaredoxin-C5, chloroplastic from Arabidopsis thaliana (Mouse-ear cress).